The primary structure comprises 465 residues: Ribulose bisphosphate carboxylase large chain (465 aa).

Position 4 is an N6,N6,N6-trimethyllysine (Lys4). The substrate site is built by Asn113 and Thr163. Residue Lys165 is the Proton acceptor of the active site. Substrate is bound at residue Lys167. The Mg(2+) site is built by Lys191, Asp193, and Glu194. Lys191 is modified (N6-carboxylysine). His284 acts as the Proton acceptor in catalysis. Residues Arg285, His317, and Ser369 each contribute to the substrate site.

It belongs to the RuBisCO large chain family. Type I subfamily. In terms of assembly, heterohexadecamer of 8 large chains and 8 small chains; disulfide-linked. The disulfide link is formed within the large subunit homodimers. It depends on Mg(2+) as a cofactor. Post-translationally, the disulfide bond which can form in the large chain dimeric partners within the hexadecamer appears to be associated with oxidative stress and protein turnover.

Its subcellular location is the plastid. The protein resides in the chloroplast. The enzyme catalyses 2 (2R)-3-phosphoglycerate + 2 H(+) = D-ribulose 1,5-bisphosphate + CO2 + H2O. It catalyses the reaction D-ribulose 1,5-bisphosphate + O2 = 2-phosphoglycolate + (2R)-3-phosphoglycerate + 2 H(+). RuBisCO catalyzes two reactions: the carboxylation of D-ribulose 1,5-bisphosphate, the primary event in carbon dioxide fixation, as well as the oxidative fragmentation of the pentose substrate in the photorespiration process. Both reactions occur simultaneously and in competition at the same active site. This is Ribulose bisphosphate carboxylase large chain from Bauera rubioides (Dog rose).